A 297-amino-acid chain; its full sequence is 4-diphosphocytidyl-2-C-methyl-D-erythritol kinase (297 aa).

Lys22 is an active-site residue. ATP is bound at residue 111–121 (PSQAGMGGGSS). Asp153 is an active-site residue.

It belongs to the GHMP kinase family. IspE subfamily.

It carries out the reaction 4-CDP-2-C-methyl-D-erythritol + ATP = 4-CDP-2-C-methyl-D-erythritol 2-phosphate + ADP + H(+). Its pathway is isoprenoid biosynthesis; isopentenyl diphosphate biosynthesis via DXP pathway; isopentenyl diphosphate from 1-deoxy-D-xylulose 5-phosphate: step 3/6. Functionally, catalyzes the phosphorylation of the position 2 hydroxy group of 4-diphosphocytidyl-2C-methyl-D-erythritol. The protein is 4-diphosphocytidyl-2-C-methyl-D-erythritol kinase of Polaromonas naphthalenivorans (strain CJ2).